The chain runs to 450 residues: 23S rRNA (uracil(1939)-C(5))-methyltransferase RlmD (450 aa).

The region spanning 12–70 is the TRAM domain; the sequence is SKQLSAKLSLSVNQLDHLGAGIAQHQGKVVFIPGALPDETVTVQLTEQKKNYARAKLIK. [4Fe-4S] cluster-binding residues include cysteine 83, cysteine 89, cysteine 92, and cysteine 171. Glutamine 283, phenylalanine 312, asparagine 317, glutamate 333, aspartate 360, and aspartate 380 together coordinate S-adenosyl-L-methionine. Cysteine 406 serves as the catalytic Nucleophile.

The protein belongs to the class I-like SAM-binding methyltransferase superfamily. RNA M5U methyltransferase family. RlmD subfamily.

The enzyme catalyses uridine(1939) in 23S rRNA + S-adenosyl-L-methionine = 5-methyluridine(1939) in 23S rRNA + S-adenosyl-L-homocysteine + H(+). In terms of biological role, catalyzes the formation of 5-methyl-uridine at position 1939 (m5U1939) in 23S rRNA. The chain is 23S rRNA (uracil(1939)-C(5))-methyltransferase RlmD from Shewanella baltica (strain OS223).